Consider the following 551-residue polypeptide: Cytochrome P450 monooxygenase abl5 (551 aa).

An N-linked (GlcNAc...) asparagine glycan is attached at asparagine 24. Residues 37–57 form a helical membrane-spanning segment; that stretch reads VVLNTLTAIVVVWICYRAVIY. Residues asparagine 174, asparagine 218, asparagine 283, asparagine 307, and asparagine 441 are each glycosylated (N-linked (GlcNAc...) asparagine). Position 495 (cysteine 495) interacts with heme.

Belongs to the cytochrome P450 family. Requires heme as cofactor.

It is found in the membrane. In terms of biological role, cytochrome P450 monooxygenase; part of the gene cluster that mediates the biosynthesis of abscisic acid (ABA), a phytohormone that acts antagonistically toward salicylic acid (SA), jasmonic acid (JA) and ethylene (ETH) signaling, to impede plant defense responses. The first step of the pathway catalyzes the reaction from farnesyl diphosphate to alpha-ionylideneethane performed by the alpha-ionylideneethane synthase abl3 via a three-step reaction mechanism involving 2 neutral intermediates, beta-farnesene and allofarnesene. The cytochrome P450 monooxygenase abl1 might then be involved in the conversion of alpha-ionylideneethane to alpha-ionylideneacetic acid. Alpha-ionylideneacetic acid is further converted to abscisic acid in 2 steps involving the cytochrome P450 monooxygenase abl2 and the short-chain dehydrogenase/reductase abl4, via the intermediates 1'-deoxy-ABA or 1',4'-trans-diol-ABA, depending on the order of action of these 2 enzymes. Abl2 is responsible for the hydroxylation of carbon atom C-1' and abl4 might be involved in the oxidation of the C-4' carbon atom. The cytochrome monooxygenase abl5 seems not essential for the biosynthesis of ABA and its function remains to be identified. The protein is Cytochrome P450 monooxygenase abl5 of Leptosphaeria maculans (strain JN3 / isolate v23.1.3 / race Av1-4-5-6-7-8) (Blackleg fungus).